A 350-amino-acid chain; its full sequence is Deoxyhypusine synthase-like protein (350 aa).

The protein belongs to the deoxyhypusine synthase family.

The polypeptide is Deoxyhypusine synthase-like protein (Chlorobaculum parvum (strain DSM 263 / NCIMB 8327) (Chlorobium vibrioforme subsp. thiosulfatophilum)).